Consider the following 324-residue polypeptide: MTAAYANLFSTIAPKDFGRVAVLFGGLSAEREVSLKSGNAVLTALQSAGVDAFGIDVGADILQRLLSEKIDRAFIILHGRGGEDGSMQGLLEVAGIPYTGSGILASALAMDKLRTKQVWHTLGIPTPRHAVLRSEADCISAATELGFPLIVKPAHEGSSIGMAKVSSASELIDAWKAASTYDSQVLVEQWIHGPEFTIATLRDQVLPPIALGTPHTFYDYDAKYIANDTQYRIPCGLDAAKEKELMDLTAQACEALGIAGWGRADVMQDADGKFWFLEVNTAPGMTDHSLVPMAAKAAGLDFQQLVLAILAASVDADGKKEARG.

The 196-residue stretch at 116–311 folds into the ATP-grasp domain; the sequence is KQVWHTLGIP…FQQLVLAILA (196 aa). 142-197 is a binding site for ATP; the sequence is ATELGFPLIVKPAHEGSSIGMAKVSSASELIDAWKAASTYDSQVLVEQWIHGPEFT. Mg(2+)-binding residues include D265, E278, and N280.

It belongs to the D-alanine--D-alanine ligase family. Requires Mg(2+) as cofactor. It depends on Mn(2+) as a cofactor.

The protein localises to the cytoplasm. It catalyses the reaction 2 D-alanine + ATP = D-alanyl-D-alanine + ADP + phosphate + H(+). It participates in cell wall biogenesis; peptidoglycan biosynthesis. Cell wall formation. In Pseudomonas fluorescens (strain Pf0-1), this protein is D-alanine--D-alanine ligase.